The following is a 98-amino-acid chain: uncharacterized protein (98 aa).

The disordered stretch occupies residues 77–98 (SERAGEEVPPLAVAGSDDGHDH).

To M.tuberculosis Rv1991c and Rv3269.

This is an uncharacterized protein from Mycobacterium bovis (strain ATCC BAA-935 / AF2122/97).